The primary structure comprises 628 residues: Putative pentatricopeptide repeat-containing protein At3g13770, mitochondrial (628 aa).

The transit peptide at Met1–Tyr19 directs the protein to the mitochondrion. PPR repeat units lie at residues Gly51 to Pro85, Ala86 to Lys116, Asn117 to Pro151, Asn152 to Ser186, His187 to Arg217, Asp218 to Pro252, Asn253 to Phe287, Tyr288 to Arg318, Thr319 to Lys353, Asp355 to Thr389, and Gly392 to Lys422. The tract at residues Val427–Glu502 is type E motif. Residues Gln503–Lys533 form a type E(+) motif region. The segment at Gln534–Trp628 is type DYW motif.

Belongs to the PPR family. PCMP-H subfamily.

It localises to the mitochondrion. The sequence is that of Putative pentatricopeptide repeat-containing protein At3g13770, mitochondrial (PCMP-H85) from Arabidopsis thaliana (Mouse-ear cress).